The sequence spans 67 residues: Small ribosomal subunit protein bS21 (67 aa).

Belongs to the bacterial ribosomal protein bS21 family.

The protein is Small ribosomal subunit protein bS21 of Oleidesulfovibrio alaskensis (strain ATCC BAA-1058 / DSM 17464 / G20) (Desulfovibrio alaskensis).